The following is a 142-amino-acid chain: Transcriptional regulator MraZ (142 aa).

2 consecutive SpoVT-AbrB domains span residues 5–51 and 77–120; these read ASSL…PRPE and AMDV…DKAS.

The protein belongs to the MraZ family. Forms oligomers.

The protein resides in the cytoplasm. The protein localises to the nucleoid. This chain is Transcriptional regulator MraZ, found in Verminephrobacter eiseniae (strain EF01-2).